The sequence spans 486 residues: Endoglucanase 16 (486 aa).

The N-terminal stretch at 1–30 is a signal peptide; that stretch reads MANYKGRGNVMIRSMLLGLYGIINIVCVNG. N29 carries N-linked (GlcNAc...) asparagine glycosylation. D87 acts as the Nucleophile in catalysis. Residues H407, D458, and E467 contribute to the active site.

The protein belongs to the glycosyl hydrolase 9 (cellulase E) family.

The protein resides in the secreted. It catalyses the reaction Endohydrolysis of (1-&gt;4)-beta-D-glucosidic linkages in cellulose, lichenin and cereal beta-D-glucans.. The chain is Endoglucanase 16 from Arabidopsis thaliana (Mouse-ear cress).